A 236-amino-acid chain; its full sequence is Small ribosomal subunit protein uS2c (236 aa).

It belongs to the universal ribosomal protein uS2 family.

It localises to the plastid. It is found in the chloroplast. In Phalaenopsis aphrodite subsp. formosana (Moth orchid), this protein is Small ribosomal subunit protein uS2c (rps2).